Here is a 505-residue protein sequence, read N- to C-terminus: Flagellin (505 aa).

Belongs to the bacterial flagellin family.

It localises to the secreted. Its subcellular location is the bacterial flagellum. In terms of biological role, flagellin is the subunit protein which polymerizes to form the filaments of bacterial flagella. This is Flagellin (fliC) from Salmonella senftenberg.